The following is a 691-amino-acid chain: POU domain, class 6, transcription factor 2 (691 aa).

Disordered stretches follow at residues 1 to 61 (MIAG…RGNT), 188 to 297 (QQQQ…LQLV), and 435 to 461 (GQAATSHSPVRQASSSSSSSSSSSALS). Residues 17 to 28 (MNAELRGEDKAA) show a composition bias toward basic and acidic residues. Low complexity-rich tracts occupy residues 188–197 (QQQQQQQQQQ) and 206–216 (QHPQPASQAPP). Over residues 217–237 (QSQPTPPHQPPPASQQLPAPP) the composition is skewed to pro residues. Positions 238-272 (AQLEQATQPQQHQPHSHPQNQTQNQPSPTQQSSSP) are enriched in low complexity. The span at 437 to 447 (AATSHSPVRQA) shows a compositional bias: polar residues. A compositionally biased stretch (low complexity) spans 448 to 458 (SSSSSSSSSSS). The 111-residue stretch at 476 to 586 (VDGVNLEEIR…VLERWMAEAE (111 aa)) folds into the POU-specific domain. Positions 607–666 (KRKRRTSFTPQALEILNAHFEKNTHPSGQEMTEIAEKLNYDREVVRVWFCNKRQALKNTI) form a DNA-binding region, homeobox. Positions 670 to 691 (KQHEPTSAAPLEPLADSPEENC) are disordered.

Belongs to the POU transcription factor family. Class-6 subfamily. As to expression, expressed in kidney, heart, muscle, spleen and ovary, but not in lung.

It localises to the nucleus. In terms of biological role, probable transcription factor likely to be involved in early steps in the differentiation of amacrine and ganglion cells. Recognizes and binds to the DNA sequence 5'-ATGCAAAT-3'. In Mus musculus (Mouse), this protein is POU domain, class 6, transcription factor 2 (Pou6f2).